Consider the following 28-residue polypeptide: Ornatin-D (28 aa).

Belongs to the ornatin family.

It is found in the secreted. Its function is as follows. Potent inhibitor of fibrinogen interaction with platelet receptors expressed on glycoprotein IIb-IIIa complex. May prevent blood from clotting during either feeding and/or storage of ingested blood. The chain is Ornatin-D from Placobdella ornata (Turtle leech).